Consider the following 154-residue polypeptide: Transcriptional repressor NrdR (154 aa).

Residues 3-34 fold into a zinc finger; sequence CPYCRHPDSRVVDSREADDGQLIRRRRSCPEC. The ATP-cone domain maps to 46 to 136; it reads LAVVKRSGVT…VYRSFESLAD (91 aa).

It belongs to the NrdR family. Zn(2+) serves as cofactor.

Its function is as follows. Negatively regulates transcription of bacterial ribonucleotide reductase nrd genes and operons by binding to NrdR-boxes. The chain is Transcriptional repressor NrdR from Salinispora tropica (strain ATCC BAA-916 / DSM 44818 / JCM 13857 / NBRC 105044 / CNB-440).